A 284-amino-acid chain; its full sequence is Bifunctional protein FolD (284 aa).

Residues 163-165, Ser-188, and Ile-229 contribute to the NADP(+) site; that span reads GRS.

It belongs to the tetrahydrofolate dehydrogenase/cyclohydrolase family. Homodimer.

The enzyme catalyses (6R)-5,10-methylene-5,6,7,8-tetrahydrofolate + NADP(+) = (6R)-5,10-methenyltetrahydrofolate + NADPH. It catalyses the reaction (6R)-5,10-methenyltetrahydrofolate + H2O = (6R)-10-formyltetrahydrofolate + H(+). Its pathway is one-carbon metabolism; tetrahydrofolate interconversion. Catalyzes the oxidation of 5,10-methylenetetrahydrofolate to 5,10-methenyltetrahydrofolate and then the hydrolysis of 5,10-methenyltetrahydrofolate to 10-formyltetrahydrofolate. The polypeptide is Bifunctional protein FolD (Campylobacter hominis (strain ATCC BAA-381 / DSM 21671 / CCUG 45161 / LMG 19568 / NCTC 13146 / CH001A)).